The chain runs to 185 residues: NAD(P)H-quinone oxidoreductase subunit J (185 aa).

This sequence belongs to the complex I 30 kDa subunit family. In terms of assembly, NDH-1 can be composed of about 15 different subunits; different subcomplexes with different compositions have been identified which probably have different functions.

The protein localises to the cellular thylakoid membrane. It catalyses the reaction a plastoquinone + NADH + (n+1) H(+)(in) = a plastoquinol + NAD(+) + n H(+)(out). It carries out the reaction a plastoquinone + NADPH + (n+1) H(+)(in) = a plastoquinol + NADP(+) + n H(+)(out). In terms of biological role, NDH-1 shuttles electrons from an unknown electron donor, via FMN and iron-sulfur (Fe-S) centers, to quinones in the respiratory and/or the photosynthetic chain. The immediate electron acceptor for the enzyme in this species is believed to be plastoquinone. Couples the redox reaction to proton translocation, and thus conserves the redox energy in a proton gradient. Cyanobacterial NDH-1 also plays a role in inorganic carbon-concentration. This Prochlorococcus marinus (strain MIT 9303) protein is NAD(P)H-quinone oxidoreductase subunit J.